Here is a 202-residue protein sequence, read N- to C-terminus: MGQSSLDHGVQGPVAGTGDFGPLKEATATGFISCAQAPRRARKRVEGTASSNVFSMFDQSQIQEFKEAFTIMDQNRDGFIDKEDLRDTFAALGRINVKNEELEAMVKEAPGPINFTVFLTMFGEKLKGTDPEETILHAFKVFDTEGKGFVKADFIKEKLMTQADRFSEEEVKQMFAAFPPDVCGNLDYRNLCYVITHGEEKD.

The disordered stretch occupies residues 1-21; it reads MGQSSLDHGVQGPVAGTGDFG. EF-hand domains lie at 60–95, 130–165, and 166–201; these read SQIQ…LGRI, DPEE…QADR, and FSEE…GEEK. Ca(2+)-binding residues include D73, N75, D77, and D84.

Myosin is a hexamer of 2 heavy chains and 4 light chains. In terms of tissue distribution, specifically expressed in precursor B- and T-lymphocytes.

This is Myosin regulatory light chain 10 (Myl10) from Mus musculus (Mouse).